The sequence spans 665 residues: E3 ubiquitin-protein ligase cblA (665 aa).

Residues 30 to 50 (NNNNNINNNNNNNNINSNNNG) are disordered. A 4H region spans residues 109–231 (TSLVNYIHYE…NNENNNNNNN (123 aa)). Positions 109–400 (TSLVNYIHYE…PDIFKSILSF (292 aa)) constitute a Cbl-PTB domain. Residues 232–306 (NYNPYELLSN…FKLSVFIKWF (75 aa)) are EF-hand-like. 4 residues coordinate Ca(2+): aspartate 287, threonine 289, aspartate 291, and tyrosine 293. An SH2-like region spans residues 307 to 400 (GALPVSLGIF…PDIFKSILSF (94 aa)). 2 disordered regions span residues 437-456 (ENNN…INTF) and 467-609 (DSSN…NNNN). A compositionally biased stretch (low complexity) spans 467-478 (DSSNSSDTNKSP). Residues 479 to 544 (TKSRKSSFKN…NNNNNNNNNN (66 aa)) are a coiled coil. Over residues 486-512 (FKNDKDKKEKEKEKGKDKEKEKERVSD) the composition is skewed to basic and acidic residues. Low complexity-rich tracts occupy residues 530–561 (NNNN…NNNN) and 571–609 (TSNG…NNNN). The RING-type zinc-finger motif lies at 618–653 (CTVCMDNEINTVFLECGHLSCCSLCSVKLKKCPICR).

Post-translationally, ubiquitinated.

The protein resides in the cytoplasm. It localises to the nucleus. The catalysed reaction is S-ubiquitinyl-[E2 ubiquitin-conjugating enzyme]-L-cysteine + [acceptor protein]-L-lysine = [E2 ubiquitin-conjugating enzyme]-L-cysteine + N(6)-ubiquitinyl-[acceptor protein]-L-lysine.. It functions in the pathway protein modification; protein ubiquitination. Functionally, acts as an E3 ubiquitin-protein ligase, which accepts ubiquitin from specific E2 ubiquitin-conjugating enzymes, and then transfers it to substrates promoting their degradation by the proteasome. Up-regulates STATc tyrosine phosphorylation via an inhibitory effect on ptpC accumulation. Recognizes activated receptor tyrosine kinases, RTKs and terminates signaling. The protein is E3 ubiquitin-protein ligase cblA (cblA-1) of Dictyostelium discoideum (Social amoeba).